The chain runs to 1442 residues: DNA polymerase III PolC-type (1442 aa).

The Exonuclease domain occupies 409 to 568 (YVIFDIETTG…YDAIVLADVF (160 aa)).

This sequence belongs to the DNA polymerase type-C family. PolC subfamily.

It is found in the cytoplasm. The catalysed reaction is DNA(n) + a 2'-deoxyribonucleoside 5'-triphosphate = DNA(n+1) + diphosphate. Required for replicative DNA synthesis. This DNA polymerase also exhibits 3' to 5' exonuclease activity. The chain is DNA polymerase III PolC-type from Ureaplasma parvum serovar 3 (strain ATCC 700970).